A 451-amino-acid polypeptide reads, in one-letter code: Phosphoglucosamine mutase (451 aa).

Catalysis depends on S107, which acts as the Phosphoserine intermediate. Mg(2+)-binding residues include S107, D246, D248, and D250. S107 carries the phosphoserine modification.

The protein belongs to the phosphohexose mutase family. Requires Mg(2+) as cofactor. Post-translationally, activated by phosphorylation.

It carries out the reaction alpha-D-glucosamine 1-phosphate = D-glucosamine 6-phosphate. In terms of biological role, catalyzes the conversion of glucosamine-6-phosphate to glucosamine-1-phosphate. The chain is Phosphoglucosamine mutase from Burkholderia lata (strain ATCC 17760 / DSM 23089 / LMG 22485 / NCIMB 9086 / R18194 / 383).